Reading from the N-terminus, the 194-residue chain is Peptidyl-tRNA hydrolase (194 aa).

Tyrosine 17 contributes to the tRNA binding site. Histidine 22 serves as the catalytic Proton acceptor. The tRNA site is built by tyrosine 68, asparagine 70, and asparagine 116.

Belongs to the PTH family. In terms of assembly, monomer.

The protein localises to the cytoplasm. The enzyme catalyses an N-acyl-L-alpha-aminoacyl-tRNA + H2O = an N-acyl-L-amino acid + a tRNA + H(+). In terms of biological role, hydrolyzes ribosome-free peptidyl-tRNAs (with 1 or more amino acids incorporated), which drop off the ribosome during protein synthesis, or as a result of ribosome stalling. Its function is as follows. Catalyzes the release of premature peptidyl moieties from peptidyl-tRNA molecules trapped in stalled 50S ribosomal subunits, and thus maintains levels of free tRNAs and 50S ribosomes. This is Peptidyl-tRNA hydrolase from Pseudomonas fluorescens (strain SBW25).